The following is a 465-amino-acid chain: GTPase Der (465 aa).

EngA-type G domains are found at residues 3 to 167 (PLVA…PEEG) and 179 to 352 (IRIA…ESAN). GTP-binding positions include 9–16 (GRPNVGKS), 57–61 (DTGGI), 119–122 (NKID), 185–192 (GRPNVGKS), 232–236 (DTAGL), and 297–300 (NKWD). The KH-like domain maps to 353–437 (KTFTTSEVNK…PVSFIFREGT (85 aa)).

Belongs to the TRAFAC class TrmE-Era-EngA-EngB-Septin-like GTPase superfamily. EngA (Der) GTPase family. As to quaternary structure, associates with the 50S ribosomal subunit.

Its function is as follows. GTPase that plays an essential role in the late steps of ribosome biogenesis. This is GTPase Der from Stenotrophomonas maltophilia (strain R551-3).